A 253-amino-acid chain; its full sequence is Imidazole glycerol phosphate synthase subunit HisF (253 aa).

Residues Asp11 and Asp130 contribute to the active site.

It belongs to the HisA/HisF family. In terms of assembly, heterodimer of HisH and HisF.

It is found in the cytoplasm. It carries out the reaction 5-[(5-phospho-1-deoxy-D-ribulos-1-ylimino)methylamino]-1-(5-phospho-beta-D-ribosyl)imidazole-4-carboxamide + L-glutamine = D-erythro-1-(imidazol-4-yl)glycerol 3-phosphate + 5-amino-1-(5-phospho-beta-D-ribosyl)imidazole-4-carboxamide + L-glutamate + H(+). The protein operates within amino-acid biosynthesis; L-histidine biosynthesis; L-histidine from 5-phospho-alpha-D-ribose 1-diphosphate: step 5/9. Functionally, IGPS catalyzes the conversion of PRFAR and glutamine to IGP, AICAR and glutamate. The HisF subunit catalyzes the cyclization activity that produces IGP and AICAR from PRFAR using the ammonia provided by the HisH subunit. This Paracoccus denitrificans (strain Pd 1222) protein is Imidazole glycerol phosphate synthase subunit HisF.